We begin with the raw amino-acid sequence, 158 residues long: Probable inactive acireductone dioxygenase 2 (158 aa).

Belongs to the acireductone dioxygenase (ARD) family.

It is found in the cytoplasm. The protein resides in the nucleus. Its function is as follows. Probable inactive acireductone dioxygenase. The protein is Probable inactive acireductone dioxygenase 2 of Caenorhabditis elegans.